Reading from the N-terminus, the 1162-residue chain is Sialidase (1162 aa).

3 BNR repeats span residues 23 to 34 (KYSVDDGETWET), 163 to 174 (FYSEDDGKTWKF), and 209 to 220 (YESSDMEKPWVE). N-linked (GlcNAc...) asparagine glycans are attached at residues N342 and N394. The interval 587–1123 (HMDSSSDSSA…STPSTPAGSS (537 aa)) is disordered. Positions 589–615 (DSSSDSSAHSTPSTPADSSAHSTPSTP) are enriched in low complexity. Positions 589–1120 (DSSSDSSAHS…SAHSTPSTPA (532 aa)) are 44 X 12 AA tandem repeats, LTR domain. Polar residues-rich tracts occupy residues 616-689 (VDSS…TPVD) and 699-1123 (PADS…AGSS). Residue N1125 is glycosylated (N-linked (GlcNAc...) asparagine).

Belongs to the glycosyl hydrolase 33 family.

Its subcellular location is the cell membrane. The catalysed reaction is Hydrolysis of alpha-(2-&gt;3)-, alpha-(2-&gt;6)-, alpha-(2-&gt;8)- glycosidic linkages of terminal sialic acid residues in oligosaccharides, glycoproteins, glycolipids, colominic acid and synthetic substrates.. In terms of biological role, developmentally regulated neuraminidase implicated in parasite invasion of cells. This chain is Sialidase (TCNA), found in Trypanosoma cruzi.